The following is a 61-amino-acid chain: Photosystem II reaction center X protein (61 aa).

A helical membrane pass occupies residues 26-46 (IGSFIAAALLIVIPATAFLIF).

This sequence belongs to the PsbX family. Type 2 subfamily. PSII consists of a core antenna complex that captures photons, and an electron transfer chain that converts photonic excitation into a charge separation. PSII forms dimeric complexes.

The protein localises to the cellular thylakoid membrane. Functionally, involved in the binding and/or turnover of quinones at the Q(B) site of Photosystem II. The protein is Photosystem II reaction center X protein of Prochlorococcus marinus (strain MIT 9301).